The sequence spans 227 residues: 7-cyano-7-deazaguanine synthase (227 aa).

Position 8 to 18 (8 to 18 (FSGGQDSTTCL)) interacts with ATP. Positions 187, 196, 199, and 202 each coordinate Zn(2+).

Belongs to the QueC family. Requires Zn(2+) as cofactor.

The catalysed reaction is 7-carboxy-7-deazaguanine + NH4(+) + ATP = 7-cyano-7-deazaguanine + ADP + phosphate + H2O + H(+). Its pathway is purine metabolism; 7-cyano-7-deazaguanine biosynthesis. Functionally, catalyzes the ATP-dependent conversion of 7-carboxy-7-deazaguanine (CDG) to 7-cyano-7-deazaguanine (preQ(0)). The chain is 7-cyano-7-deazaguanine synthase from Shewanella pealeana (strain ATCC 700345 / ANG-SQ1).